A 118-amino-acid chain; its full sequence is Putative membrane protein insertion efficiency factor (118 aa).

Belongs to the UPF0161 family.

It is found in the cell inner membrane. Could be involved in insertion of integral membrane proteins into the membrane. The chain is Putative membrane protein insertion efficiency factor from Helicobacter pylori (strain P12).